A 208-amino-acid chain; its full sequence is Uracil phosphoribosyltransferase (208 aa).

Residues Arg-78, Arg-103, and 130–138 (DPMLATGVS) contribute to the 5-phospho-alpha-D-ribose 1-diphosphate site. Uracil contacts are provided by residues Ile-193 and 198–200 (GDA). Asp-199 provides a ligand contact to 5-phospho-alpha-D-ribose 1-diphosphate.

Belongs to the UPRTase family. Mg(2+) is required as a cofactor.

It catalyses the reaction UMP + diphosphate = 5-phospho-alpha-D-ribose 1-diphosphate + uracil. It participates in pyrimidine metabolism; UMP biosynthesis via salvage pathway; UMP from uracil: step 1/1. With respect to regulation, allosterically activated by GTP. In terms of biological role, catalyzes the conversion of uracil and 5-phospho-alpha-D-ribose 1-diphosphate (PRPP) to UMP and diphosphate. This chain is Uracil phosphoribosyltransferase, found in Thermosipho melanesiensis (strain DSM 12029 / CIP 104789 / BI429).